Consider the following 313-residue polypeptide: Oxaloacetate tautomerase Fahd2a, mitochondrial (313 aa).

Residues 1–84 (MLGSGRRRLL…TALSVARRAL (84 aa)) constitute a mitochondrion transit peptide. Mg(2+)-binding residues include glutamate 159, glutamate 161, and aspartate 190. The residue at position 202 (lysine 202) is an N6-acetyllysine; alternate. N6-succinyllysine; alternate is present on lysine 202. Lysine 233 is subject to N6-acetyllysine.

The protein belongs to the FAH family. Requires Mg(2+) as cofactor. Mn(2+) serves as cofactor.

It localises to the mitochondrion. It catalyses the reaction oxaloacetate = enol-oxaloacetate. Tautomerase that converts enol-oxaloacetate, a strong inhibitor of succinate dehydrogenase, to the physiological keto form of oxaloacetate. It is thereby required to maximize aerobic respiration efficiency by preventing succinate dehydrogenase inhibition. This Rattus norvegicus (Rat) protein is Oxaloacetate tautomerase Fahd2a, mitochondrial.